The following is a 734-amino-acid chain: Ribosomal RNA large subunit methyltransferase K/L (734 aa).

Positions 49–167 (HAYRICMWSR…KTEHTYCLDL (119 aa)) constitute a THUMP domain.

This sequence belongs to the methyltransferase superfamily. RlmKL family.

It localises to the cytoplasm. It catalyses the reaction guanosine(2445) in 23S rRNA + S-adenosyl-L-methionine = N(2)-methylguanosine(2445) in 23S rRNA + S-adenosyl-L-homocysteine + H(+). The catalysed reaction is guanosine(2069) in 23S rRNA + S-adenosyl-L-methionine = N(2)-methylguanosine(2069) in 23S rRNA + S-adenosyl-L-homocysteine + H(+). Specifically methylates the guanine in position 2445 (m2G2445) and the guanine in position 2069 (m7G2069) of 23S rRNA. This Acinetobacter baumannii (strain AYE) protein is Ribosomal RNA large subunit methyltransferase K/L.